The sequence spans 622 residues: Chaperone protein HscA homolog (622 aa).

Belongs to the heat shock protein 70 family.

In terms of biological role, chaperone involved in the maturation of iron-sulfur cluster-containing proteins. Has a low intrinsic ATPase activity which is markedly stimulated by HscB. In Acidovorax ebreus (strain TPSY) (Diaphorobacter sp. (strain TPSY)), this protein is Chaperone protein HscA homolog.